A 115-amino-acid polypeptide reads, in one-letter code: Guanylin (115 aa).

The N-terminal stretch at M1–T23 is a signal peptide. A propeptide spanning residues V24 to D100 is cleaved from the precursor. Cystine bridges form between C69–C82, C104–C112, and C107–C115.

This sequence belongs to the guanylin family. As to expression, intestine and in low abundance in adrenal gland, kidney, and uterus/oviduct.

It is found in the secreted. Functionally, endogenous activator of intestinal guanylate cyclase. It stimulates this enzyme through the same receptor binding region as the heat-stable enterotoxins. This chain is Guanylin (Guca2a), found in Rattus norvegicus (Rat).